The chain runs to 253 residues: 5-oxoprolinase subunit A (253 aa).

The protein belongs to the LamB/PxpA family. In terms of assembly, forms a complex composed of PxpA, PxpB and PxpC.

The catalysed reaction is 5-oxo-L-proline + ATP + 2 H2O = L-glutamate + ADP + phosphate + H(+). Catalyzes the cleavage of 5-oxoproline to form L-glutamate coupled to the hydrolysis of ATP to ADP and inorganic phosphate. This is 5-oxoprolinase subunit A from Bacillus licheniformis (strain ATCC 14580 / DSM 13 / JCM 2505 / CCUG 7422 / NBRC 12200 / NCIMB 9375 / NCTC 10341 / NRRL NRS-1264 / Gibson 46).